We begin with the raw amino-acid sequence, 154 residues long: Transcriptional repressor NrdR (154 aa).

The segment at 3–34 (CPFCGANDTKVIDSRLVAEGEQVRRRRECLAC) is a zinc-finger region. Residues 49–139 (PRLIKQDGSR…VYRRFQDLNE (91 aa)) enclose the ATP-cone domain.

The protein belongs to the NrdR family. Zn(2+) serves as cofactor.

Negatively regulates transcription of bacterial ribonucleotide reductase nrd genes and operons by binding to NrdR-boxes. This chain is Transcriptional repressor NrdR, found in Pseudomonas savastanoi pv. phaseolicola (strain 1448A / Race 6) (Pseudomonas syringae pv. phaseolicola (strain 1448A / Race 6)).